Consider the following 270-residue polypeptide: Cell division protein DivIB (270 aa).

At 1–28 (MAENKRVISIENRIPELKKYRKKKLVRH) the chain is on the cytoplasmic side. The helical transmembrane segment at 29 to 49 (LAILIGIFVILIAITLYFLSP) threads the bilayer. Residues 50-270 (LSKLDKIAVS…AAKEKKETNE (221 aa)) are Extracellular-facing. In terms of domain architecture, POTRA spans 51 to 119 (SKLDKIAVSG…NDVQINITEF (69 aa)).

It belongs to the FtsQ/DivIB family. DivIB subfamily.

Its subcellular location is the cell membrane. Functionally, cell division protein that may be involved in stabilizing or promoting the assembly of the division complex. This Listeria monocytogenes serovar 1/2a (strain ATCC BAA-679 / EGD-e) protein is Cell division protein DivIB.